Reading from the N-terminus, the 70-residue chain is Large ribosomal subunit protein bL31 (70 aa).

Zn(2+) contacts are provided by Cys-16, Cys-18, Cys-36, and Cys-39.

This sequence belongs to the bacterial ribosomal protein bL31 family. Type A subfamily. As to quaternary structure, part of the 50S ribosomal subunit. The cofactor is Zn(2+).

Functionally, binds the 23S rRNA. In Fervidobacterium nodosum (strain ATCC 35602 / DSM 5306 / Rt17-B1), this protein is Large ribosomal subunit protein bL31.